Reading from the N-terminus, the 227-residue chain is Cytochrome c oxidase subunit 2 (227 aa).

Residues 1–14 (MAYPFQLGLQDATS) are Mitochondrial intermembrane-facing. Residues 15–45 (PIMEELTNFHDHTLMIVFLISTLVLYIISLM) traverse the membrane as a helical segment. Topologically, residues 46–59 (LTTKLTHTSTMDAQ) are mitochondrial matrix. The chain crosses the membrane as a helical span at residues 60–87 (EVETIWTILPAVILILIALPSLRILYMM). Over 88–227 (DEINNPVLTV…YFENWSASMI (140 aa)) the chain is Mitochondrial intermembrane. 6 residues coordinate Cu cation: His-161, Cys-196, Glu-198, Cys-200, His-204, and Met-207. Mg(2+) is bound at residue Glu-198. Tyr-218 carries the post-translational modification Phosphotyrosine.

This sequence belongs to the cytochrome c oxidase subunit 2 family. As to quaternary structure, component of the cytochrome c oxidase (complex IV, CIV), a multisubunit enzyme composed of 14 subunits. The complex is composed of a catalytic core of 3 subunits MT-CO1, MT-CO2 and MT-CO3, encoded in the mitochondrial DNA, and 11 supernumerary subunits COX4I, COX5A, COX5B, COX6A, COX6B, COX6C, COX7A, COX7B, COX7C, COX8 and NDUFA4, which are encoded in the nuclear genome. The complex exists as a monomer or a dimer and forms supercomplexes (SCs) in the inner mitochondrial membrane with NADH-ubiquinone oxidoreductase (complex I, CI) and ubiquinol-cytochrome c oxidoreductase (cytochrome b-c1 complex, complex III, CIII), resulting in different assemblies (supercomplex SCI(1)III(2)IV(1) and megacomplex MCI(2)III(2)IV(2)). Found in a complex with TMEM177, COA6, COX18, COX20, SCO1 and SCO2. Interacts with TMEM177 in a COX20-dependent manner. Interacts with COX20. Interacts with COX16. The cofactor is Cu cation.

It localises to the mitochondrion inner membrane. The catalysed reaction is 4 Fe(II)-[cytochrome c] + O2 + 8 H(+)(in) = 4 Fe(III)-[cytochrome c] + 2 H2O + 4 H(+)(out). Its function is as follows. Component of the cytochrome c oxidase, the last enzyme in the mitochondrial electron transport chain which drives oxidative phosphorylation. The respiratory chain contains 3 multisubunit complexes succinate dehydrogenase (complex II, CII), ubiquinol-cytochrome c oxidoreductase (cytochrome b-c1 complex, complex III, CIII) and cytochrome c oxidase (complex IV, CIV), that cooperate to transfer electrons derived from NADH and succinate to molecular oxygen, creating an electrochemical gradient over the inner membrane that drives transmembrane transport and the ATP synthase. Cytochrome c oxidase is the component of the respiratory chain that catalyzes the reduction of oxygen to water. Electrons originating from reduced cytochrome c in the intermembrane space (IMS) are transferred via the dinuclear copper A center (CU(A)) of subunit 2 and heme A of subunit 1 to the active site in subunit 1, a binuclear center (BNC) formed by heme A3 and copper B (CU(B)). The BNC reduces molecular oxygen to 2 water molecules using 4 electrons from cytochrome c in the IMS and 4 protons from the mitochondrial matrix. The protein is Cytochrome c oxidase subunit 2 (MT-CO2) of Leopoldamys sabanus (Long-tailed giant rat).